Reading from the N-terminus, the 207-residue chain is Ribosomal RNA small subunit methyltransferase G (207 aa).

S-adenosyl-L-methionine contacts are provided by residues Gly-73, Leu-78, 124–125 (VE), and Arg-139.

The protein belongs to the methyltransferase superfamily. RNA methyltransferase RsmG family.

The protein localises to the cytoplasm. It carries out the reaction guanosine(527) in 16S rRNA + S-adenosyl-L-methionine = N(7)-methylguanosine(527) in 16S rRNA + S-adenosyl-L-homocysteine. In terms of biological role, specifically methylates the N7 position of guanine in position 527 of 16S rRNA. This is Ribosomal RNA small subunit methyltransferase G from Shigella flexneri.